A 167-amino-acid chain; its full sequence is Transcription antitermination protein NusB (167 aa).

Belongs to the NusB family.

In terms of biological role, involved in transcription antitermination. Required for transcription of ribosomal RNA (rRNA) genes. Binds specifically to the boxA antiterminator sequence of the ribosomal RNA (rrn) operons. The protein is Transcription antitermination protein NusB of Nitrosomonas europaea (strain ATCC 19718 / CIP 103999 / KCTC 2705 / NBRC 14298).